Reading from the N-terminus, the 499-residue chain is Neuronal acetylcholine receptor subunit alpha-3 (499 aa).

An N-terminal signal peptide occupies residues 1 to 25 (MGVVLLPPPLSMLMLVLMLLPAASA). Topologically, residues 26–244 (SEAEHRLFQY…PLFYTINLII (219 aa)) are extracellular. Asparagine 49 and asparagine 166 each carry an N-linked (GlcNAc...) asparagine glycan. Cystine bridges form between cysteine 153–cysteine 167 and cysteine 217–cysteine 218. The helical transmembrane segment at 245-260 (PCLLISFLTVLVFYLP) threads the bilayer. Over 261 to 262 (SD) the chain is Cytoplasmic. A helical membrane pass occupies residues 263-279 (CGEKVTLCISVLLSLTV). Glutamate 265 serves as a coordination point for Na(+). Over 280–301 (FLLVITETIPSTSLVIPLIGEY) the chain is Extracellular. A helical membrane pass occupies residues 302 to 320 (LLFTMIFVTLSIVITVFVL). Topologically, residues 321–468 (NVHYRTPTTH…QDDWKYVAMV (148 aa)) are cytoplasmic. Residues serine 407 and serine 410 each carry the phosphoserine modification. The chain crosses the membrane as a helical span at residues 469–487 (IDRIFLWVFILVCILGTAG). Residues 488 to 499 (LFLQPLMARDDT) are Extracellular-facing.

Belongs to the ligand-gated ion channel (TC 1.A.9) family. Acetylcholine receptor (TC 1.A.9.1) subfamily. Alpha-3/CHRNA3 sub-subfamily. Neuronal AChR is composed of two different types of subunits: alpha and beta. CHRNA3/Alpha-3 subunit can be combined to CHRNB2/beta-2 or CHRNB4/beta-4 to give rise to functional receptors. Part of a complex composed of STUB1/CHIP, VCP/p97, CHRNA3, and UBXN2A that modulates the ubiquitination and endoplasmic reticulum-associated degradation (ERAD) of CHRNA3. Within the complex UBXN2A acts as a scaffold protein required for the interaction of CHRNA3 with VCP/p97, this interaction also inhibits CHRNA3 ubiquitination by STUB1/CHIP and subsequently ERAD. Interacts with UBXN2A (via SEP domain), the interaction is required for the interaction of CHRNA3 in the STUB1:VCP:UBXN2A complex. Interacts with RIC3; which is required for proper folding and assembly. Post-translationally, ubiquitinated; by STUB1/CHIP and thereafter degraded by the 26S proteosome complex. In terms of tissue distribution, expressed in neurons. Expressed in umbrella cells of urothelium (at protein level).

It is found in the synaptic cell membrane. The protein localises to the cell membrane. It localises to the endoplasmic reticulum. The protein resides in the golgi apparatus. It carries out the reaction Ca(2+)(in) = Ca(2+)(out). It catalyses the reaction K(+)(in) = K(+)(out). The catalysed reaction is Na(+)(in) = Na(+)(out). With respect to regulation, activated by a myriad of ligands such as acetylcholine, cytisine, nicotine, choline and epibatidine. The heteropentamer CHRNA3:CHRNB2 activity is blocked by alpha-conotoxins ImI, ImII, PnIA, GID and MII. The heteropentamer CHRNA3:CHRNB4 activity is blocked by the alpha-conotoxin ImI and AuIB. Its function is as follows. Component of neuronal acetylcholine receptors (nAChRs) that function as pentameric, ligand-gated cation channels with high calcium permeability among other activities. nAChRs are excitatory neurotrasnmitter receptors formed by a collection of nAChR subunits known to mediate synaptic transmission in the nervous system and the neuromuscular junction. Each nAchR subunit confers differential attributes to channel properties, including activation, deactivation and desensitization kinetics, pH sensitivity, cation permeability, and binding to allosteric modulators. CHRNA3 forms heteropentameric neuronal acetylcholine receptors with CHRNB2 and CHRNB4. CHRNA3:CHRNB4 being predominant in neurons of the autonomic ganglia, it is known as ganglionic nicotinic receptor. CHRNA3:CHRNB4 also plays an important role in the habenulo-interpeduncular tract, modulating the mesolimbic dopamine system and affecting reward circuits and addiction. Hypothalamic CHRNA3:CHRNB4 nAChR activation by nicotine leads to activation of POMC neurons and a decrease in food intake. Also expressed in the urothelium where it modulates reflex bladder activity by increasing intracellular calcium through extracellular influx and basal ATP release. The chain is Neuronal acetylcholine receptor subunit alpha-3 (Chrna3) from Rattus norvegicus (Rat).